The following is a 110-amino-acid chain: Phosphoribosyl-AMP cyclohydrolase (110 aa).

Asp80 provides a ligand contact to Mg(2+). Cys81 is a binding site for Zn(2+). Mg(2+) contacts are provided by Asp82 and Asp84. The Zn(2+) site is built by Cys97 and Cys104.

The protein belongs to the PRA-CH family. Homodimer. The cofactor is Mg(2+). Requires Zn(2+) as cofactor.

It is found in the cytoplasm. The enzyme catalyses 1-(5-phospho-beta-D-ribosyl)-5'-AMP + H2O = 1-(5-phospho-beta-D-ribosyl)-5-[(5-phospho-beta-D-ribosylamino)methylideneamino]imidazole-4-carboxamide. It functions in the pathway amino-acid biosynthesis; L-histidine biosynthesis; L-histidine from 5-phospho-alpha-D-ribose 1-diphosphate: step 3/9. In terms of biological role, catalyzes the hydrolysis of the adenine ring of phosphoribosyl-AMP. The chain is Phosphoribosyl-AMP cyclohydrolase from Clostridium botulinum (strain Kyoto / Type A2).